Reading from the N-terminus, the 310-residue chain is Probable manganese-dependent inorganic pyrophosphatase (310 aa).

Histidine 9, aspartate 13, aspartate 15, aspartate 75, histidine 97, and aspartate 149 together coordinate Mn(2+).

Belongs to the PPase class C family. The cofactor is Mn(2+).

Its subcellular location is the cytoplasm. The enzyme catalyses diphosphate + H2O = 2 phosphate + H(+). The protein is Probable manganese-dependent inorganic pyrophosphatase of Brevibacillus brevis (strain 47 / JCM 6285 / NBRC 100599).